A 242-amino-acid polypeptide reads, in one-letter code: Small ribosomal subunit protein uS3 (242 aa).

Residues 39–109 (IRQYVEKNLA…QIRINVIEVA (71 aa)) enclose the KH type-2 domain. A disordered region spans residues 220–242 (VPAQAPRRQQRRRQQFEDRSSEG). Residues 233–242 (QQFEDRSSEG) show a composition bias toward basic and acidic residues.

The protein belongs to the universal ribosomal protein uS3 family. As to quaternary structure, part of the 30S ribosomal subunit. Forms a tight complex with proteins S10 and S14.

In terms of biological role, binds the lower part of the 30S subunit head. Binds mRNA in the 70S ribosome, positioning it for translation. This Microcystis aeruginosa (strain NIES-843 / IAM M-2473) protein is Small ribosomal subunit protein uS3.